The following is a 106-amino-acid chain: MEYVYAALLLHSAGKEITEDNVKAVLEAAGVEVDEARVKALVAALEGVNIDEAIQKAAMPMAVAAAPAAAAAAPAEEAKEEAKEEEEEEEEVKEEEAIEGLGALFG.

The disordered stretch occupies residues 69–106 (AAAAAPAEEAKEEAKEEEEEEEEVKEEEAIEGLGALFG). A compositionally biased stretch (acidic residues) spans 83 to 98 (KEEEEEEEEVKEEEAI).

It belongs to the eukaryotic ribosomal protein P1/P2 family. As to quaternary structure, part of the 50S ribosomal subunit. Homodimer, it forms part of the ribosomal stalk which helps the ribosome interact with GTP-bound translation factors. Forms a heptameric uL10/P0(P1)2(P1)2(P1)2 complex, where uL10/P0 forms an elongated spine to which the P1 dimers bind in a sequential fashion.

In terms of biological role, forms part of the ribosomal stalk, playing a central role in the interaction of the ribosome with GTP-bound translation factors. This Archaeoglobus fulgidus (strain ATCC 49558 / DSM 4304 / JCM 9628 / NBRC 100126 / VC-16) protein is Large ribosomal subunit protein P1.